The primary structure comprises 513 residues: Na(+)/H(+) antiporter NhaB (513 aa).

12 helical membrane-spanning segments follow: residues 21 to 41 (ICII…SPFV), 64 to 84 (QPGG…AHHV), 88 to 108 (IMAN…IYFM), 119 to 139 (LLIV…SATF), 143 to 163 (FLDA…FYGV), 202 to 222 (LLMH…VGEP), 243 to 263 (LPVS…LEHF), 299 to 318 (MGIQ…LHLA), 322 to 344 (IIGL…HAIG), 350 to 370 (PMPF…IVDL), 389 to 409 (LALF…VFVG), and 477 to 497 (MALP…EFLL).

This sequence belongs to the NhaB Na(+)/H(+) (TC 2.A.34) antiporter family.

Its subcellular location is the cell inner membrane. The enzyme catalyses 2 Na(+)(in) + 3 H(+)(out) = 2 Na(+)(out) + 3 H(+)(in). In terms of biological role, na(+)/H(+) antiporter that extrudes sodium in exchange for external protons. This chain is Na(+)/H(+) antiporter NhaB, found in Actinobacillus pleuropneumoniae serotype 3 (strain JL03).